Here is a 320-residue protein sequence, read N- to C-terminus: Transmembrane protein 41 homolog (320 aa).

Residues 20–72 (GRAKALQEHSPDQVATPLLPQVPPQEQQDLNPQQQQQQQQQQQATPQKQAMSA) are disordered. Positions 43-68 (PQEQQDLNPQQQQQQQQQQQATPQKQ) are enriched in low complexity. Helical transmembrane passes span 83–103 (VIVA…YAIF), 141–161 (VMFG…PGSL), 173–195 (FPIA…YTLS), 225–242 (LFNY…PNWF), 245–265 (LASP…FCGV), and 289–309 (FSWT…LPGL).

This sequence belongs to the TMEM41 family. As to expression, in embryos, strongly expressed in the nervous system.

It is found in the membrane. Required in cholinergic neurons, but not in motor neurons, for normal neurotransmitter release by motor neurons. Involved in muscle growth. The sequence is that of Transmembrane protein 41 homolog (stas) from Drosophila melanogaster (Fruit fly).